The primary structure comprises 311 residues: DNA-directed RNA polymerase subunit alpha (311 aa).

An alpha N-terminal domain (alpha-NTD) region spans residues 1 to 227 (MAQFQIECVE…NLFCSLRNLD (227 aa)). Positions 242–311 (ISQVLIEELQ…GISLPKEKTD (70 aa)) are alpha C-terminal domain (alpha-CTD).

This sequence belongs to the RNA polymerase alpha chain family. In terms of assembly, in plastids the minimal PEP RNA polymerase catalytic core is composed of four subunits: alpha, beta, beta', and beta''. When a (nuclear-encoded) sigma factor is associated with the core the holoenzyme is formed, which can initiate transcription.

The protein resides in the plastid. It is found in the chloroplast. The catalysed reaction is RNA(n) + a ribonucleoside 5'-triphosphate = RNA(n+1) + diphosphate. Its function is as follows. DNA-dependent RNA polymerase catalyzes the transcription of DNA into RNA using the four ribonucleoside triphosphates as substrates. The protein is DNA-directed RNA polymerase subunit alpha of Porphyra purpurea (Red seaweed).